The primary structure comprises 454 residues: Toxin CfTX-A (454 aa).

A signal peptide spans 1-18 (MDYAFIVFLVCFVSGTLG). A propeptide spanning residues 19-25 (NRRRAKR) is cleaved from the precursor. Residues 27-61 (VDEVTSGINQLVNQLNNVQQDTAAIKSALEELKTE) adopt a coiled-coil conformation.

Belongs to the jellyfish toxin family. Type II subfamily. In terms of assembly, oligomer. In terms of processing, contains 2 disulfide bonds. As to expression, nematocytes.

The protein localises to the secreted. The protein resides in the nematocyst. It is found in the target cell membrane. In terms of biological role, the fraction containing this toxin and CfTX-A shows potent hemolytic activity. This fraction causes minor effects on the cardiovascular system of anesthetized rats (at 25 ug/kg), since it has no significant effects on heart rate but produces relatively small increases in mean arterial pressure. This chain is Toxin CfTX-A, found in Chironex fleckeri (Australian box jellyfish).